Here is a 491-residue protein sequence, read N- to C-terminus: Glycogen synthase 1 (491 aa).

Lys-15 serves as a coordination point for ADP-alpha-D-glucose.

This sequence belongs to the glycosyltransferase 1 family. Bacterial/plant glycogen synthase subfamily.

It catalyses the reaction [(1-&gt;4)-alpha-D-glucosyl](n) + ADP-alpha-D-glucose = [(1-&gt;4)-alpha-D-glucosyl](n+1) + ADP + H(+). It participates in glycan biosynthesis; glycogen biosynthesis. In terms of biological role, synthesizes alpha-1,4-glucan chains using ADP-glucose. This chain is Glycogen synthase 1, found in Synechococcus sp. (strain JA-3-3Ab) (Cyanobacteria bacterium Yellowstone A-Prime).